The primary structure comprises 244 residues: Rho-related GTP-binding protein RhoE (244 aa).

30–37 (GDSQCGRT) provides a ligand contact to GTP. The Effector region signature appears at 52–60 (YVPTVFENY). GTP-binding positions include 77–81 (DTSGS) and 135–138 (CKSD). Cysteine methyl ester is present on Cys-241. Cys-241 carries the S-farnesyl cysteine lipid modification. A propeptide spans 242–244 (TVM) (removed in mature form).

This sequence belongs to the small GTPase superfamily. Rho family. In terms of assembly, binds ROCK1. Interacts with UBXD5.

The protein localises to the cell membrane. Its function is as follows. Binds GTP but lacks intrinsic GTPase activity and is resistant to Rho-specific GTPase-activating proteins. The chain is Rho-related GTP-binding protein RhoE (RND3) from Sus scrofa (Pig).